Consider the following 81-residue polypeptide: ATP synthase subunit c (81 aa).

2 consecutive transmembrane segments (helical) span residues 5–25 and 57–77; these read IAAGALIGGGLIMAGGAIGAG and VGLVEAAYFINLAFMALFVFA.

Belongs to the ATPase C chain family. As to quaternary structure, F-type ATPases have 2 components, F(1) - the catalytic core - and F(0) - the membrane proton channel. F(1) has five subunits: alpha(3), beta(3), gamma(1), delta(1), epsilon(1). F(0) has three main subunits: a(1), b(2) and c(10-14). The alpha and beta chains form an alternating ring which encloses part of the gamma chain. F(1) is attached to F(0) by a central stalk formed by the gamma and epsilon chains, while a peripheral stalk is formed by the delta and b chains.

The protein resides in the cell membrane. Functionally, f(1)F(0) ATP synthase produces ATP from ADP in the presence of a proton or sodium gradient. F-type ATPases consist of two structural domains, F(1) containing the extramembraneous catalytic core and F(0) containing the membrane proton channel, linked together by a central stalk and a peripheral stalk. During catalysis, ATP synthesis in the catalytic domain of F(1) is coupled via a rotary mechanism of the central stalk subunits to proton translocation. Key component of the F(0) channel; it plays a direct role in translocation across the membrane. A homomeric c-ring of between 10-14 subunits forms the central stalk rotor element with the F(1) delta and epsilon subunits. This is ATP synthase subunit c from Mycobacterium sp. (strain JLS).